Consider the following 500-residue polypeptide: MSLATTQSIAEIRARNKELIEEVLKVYPEKTAKRRAKHLNVHQAGKSDCGVKSNIKSIPGVMTIRGCAYAGSKGVVWGPIKDMVHISHGPVGCGQYSWGSRRNYYVGTTGVDSFVTLQFTSDFQEKDIVFGGDKKLIKVLDEIQELFPLNNGITIQSECPIGLIGDDIEAVSRSKSKEYGGKTIVPVRCEGFRGVSQSLGHHIANDAVRDWIFDKLEPEGEPKFQPTPYDVAIIGDYNIGGDAWSSRILLEEMGLRVIAQWSGDGSLAELEATPKAKLNILHCYRSMNYISRHMEEKFGIPWCEYNFFGPSKIAESLRKIAGYFDDKIKEGAERVIEKYQPLVDAVIAKYRPRLEGKTVMLYVGGLRPRHVIGAYEDLGMEVVGTGYEFGHNDDYQRTAQHYVKDSTLIYDDVNGYEFERFVEKVQPDLVGSGIKEKYVFQKMGVPFPEMHSWDYSGPYHGYDGFAIFARDMDMAVNSPIWKKTKAPWKEAAKPKLLAAE.

[8Fe-7S] cluster contacts are provided by Cys67, Cys93, and Cys159. Residues Cys283 and His451 each contribute to the [7Fe-Mo-9S-C-homocitryl] cluster site.

The protein belongs to the NifD/NifK/NifE/NifN family. As to quaternary structure, tetramer of two alpha and two beta chains. Forms complex with the iron protein (nitrogenase component 2). [8Fe-7S] cluster is required as a cofactor. It depends on [7Fe-Mo-9S-C-homocitryl] cluster as a cofactor.

It catalyses the reaction N2 + 8 reduced [2Fe-2S]-[ferredoxin] + 16 ATP + 16 H2O = H2 + 8 oxidized [2Fe-2S]-[ferredoxin] + 2 NH4(+) + 16 ADP + 16 phosphate + 6 H(+). This molybdenum-iron protein is part of the nitrogenase complex that catalyzes the key enzymatic reactions in nitrogen fixation. This chain is Nitrogenase molybdenum-iron protein alpha chain (nifD), found in Bradyrhizobium sp. (strain ANU 289).